Here is a 72-residue protein sequence, read N- to C-terminus: Small proline-rich protein 2B (72 aa).

A compositionally biased stretch (low complexity) spans 1-11 (MSYQQQQCKQP). The interval 1 to 20 (MSYQQQQCKQPCQPPPVCPT) is disordered. 3 consecutive repeat copies span residues 21-29 (PKCPEPCPP), 30-38 (PKCPEPCPP), and 39-47 (PKCPQPCPP). Residues 21 to 47 (PKCPEPCPPPKCPEPCPPPKCPQPCPP) form a 3 X 9 AA tandem repeats of P-K-C-P-[EQ]-P-C-P-P region. Positions 42–72 (PQPCPPQQCQQKYPPVTPSPPCQPKYPPKSK) are disordered. Positions 56 to 72 (PVTPSPPCQPKYPPKSK) are enriched in pro residues.

This sequence belongs to the cornifin (SPRR) family. As to expression, suprabasal layers of squamous-differentiated tissues such as epidermis, esophagus, tongue and trachea.

The protein resides in the cytoplasm. Its function is as follows. Cross-linked envelope protein of keratinocytes. It is a keratinocyte protein that first appears in the cell cytosol, but ultimately becomes cross-linked to membrane proteins by transglutaminase. All that results in the formation of an insoluble envelope beneath the plasma membrane. In Homo sapiens (Human), this protein is Small proline-rich protein 2B (SPRR2B).